The chain runs to 120 residues: MKVSVAALSCLMLVTALGSQAQVTNDAETGFMMSKLSLANSEVLDSFHAINADCCTSYIPGSIPCSLLESYLETSSKCPKPGVIFLTKNGRRLCVSPSNKQVLACRIMLKLATRIKTRKN.

The signal sequence occupies residues 1 to 21 (MKVSVAALSCLMLVTALGSQA). Intrachain disulfides connect cysteine 54/cysteine 78, cysteine 55/cysteine 94, and cysteine 65/cysteine 105.

Belongs to the intercrine beta (chemokine CC) family.

It localises to the secreted. Functionally, shows chemotactic activity for monocytes, resting T-lymphocytes, and neutrophils, but not for activated lymphocytes. Inhibits proliferation of myeloid progenitor cells in colony formation assays. This protein can bind heparin. Binds CCR1. This Macaca mulatta (Rhesus macaque) protein is C-C motif chemokine 23 (CCL23).